The sequence spans 304 residues: Probable aspartoacylase (304 aa).

H13 and E16 together coordinate Zn(2+). Substrate contacts are provided by residues R55 and 62–63 (NR). H104 contributes to the Zn(2+) binding site. Residues E162 and Y272 each coordinate substrate.

This sequence belongs to the AspA/AstE family. Aspartoacylase subfamily. It depends on Zn(2+) as a cofactor.

It carries out the reaction an N-acyl-L-aspartate + H2O = a carboxylate + L-aspartate. This chain is Probable aspartoacylase, found in Synechococcus sp. (strain CC9605).